Consider the following 705-residue polypeptide: Elongation factor G (705 aa).

Residues 8–290 (ERYRNFGIMA…GVVHLLPSPA (283 aa)) enclose the tr-type G domain. GTP is bound by residues 17-24 (AHIDAGKT), 88-92 (DTPGH), and 142-145 (NKMD). The segment at 290 to 309 (ADRPPVQGIDEDEKEDTRAA) is disordered.

Belongs to the TRAFAC class translation factor GTPase superfamily. Classic translation factor GTPase family. EF-G/EF-2 subfamily.

It localises to the cytoplasm. Functionally, catalyzes the GTP-dependent ribosomal translocation step during translation elongation. During this step, the ribosome changes from the pre-translocational (PRE) to the post-translocational (POST) state as the newly formed A-site-bound peptidyl-tRNA and P-site-bound deacylated tRNA move to the P and E sites, respectively. Catalyzes the coordinated movement of the two tRNA molecules, the mRNA and conformational changes in the ribosome. The chain is Elongation factor G from Xanthomonas euvesicatoria pv. vesicatoria (strain 85-10) (Xanthomonas campestris pv. vesicatoria).